The sequence spans 69 residues: Guanine nucleotide-binding protein G(I)/G(S)/G(O) subunit gamma-T2 (69 aa).

Residue cysteine 66 is modified to Cysteine methyl ester. The S-farnesyl cysteine moiety is linked to residue cysteine 66. Residues 67–69 constitute a propeptide, removed in mature form; that stretch reads IIS.

This sequence belongs to the G protein gamma family. As to quaternary structure, g proteins are composed of 3 units, alpha, beta and gamma.

The protein localises to the cell membrane. Guanine nucleotide-binding proteins (G proteins) are involved as a modulator or transducer in various transmembrane signaling systems. The beta and gamma chains are required for the GTPase activity, for replacement of GDP by GTP, and for G protein-effector interaction. In Bos taurus (Bovine), this protein is Guanine nucleotide-binding protein G(I)/G(S)/G(O) subunit gamma-T2 (GNGT2).